We begin with the raw amino-acid sequence, 245 residues long: P2Y purinoceptor 13 (245 aa).

Residues 1-9 are Extracellular-facing; the sequence is QLRAFVCRL. Cysteines 7 and 85 form a disulfide. Residues 10 to 30 traverse the membrane as a helical segment; the sequence is SSVIFYETMYVGIVLLGLIAF. At 31–35 the chain is on the cytoplasmic side; sequence DRFLK. The helical transmembrane segment at 36 to 56 threads the bilayer; the sequence is IIRPLRNIFLKKTVFAKTVSV. The Extracellular segment spans residues 57-85; the sequence is FIWSFFFFISLPNMILSNKEATPSSVKKC. Residues 86-106 traverse the membrane as a helical segment; it reads ASLKGPLGLKWHQIVNNISQF. The Cytoplasmic portion of the chain corresponds to 107–126; that stretch reads IFWTVFVLMLVFYVVIAKKV. The chain crosses the membrane as a helical span at residues 127–147; it reads YDSYRKSKSKDRKNNKKLEGK. The Extracellular segment spans residues 148–174; it reads VFVVVAVFFVCFAPFHFTRVPYTYSQT. A helical membrane pass occupies residues 175–195; it reads NNKTDCRLQNQLFIAKETTLF. At 196-245 the chain is on the cytoplasmic side; that stretch reads LAATNICMDPLIYIFLCKKFTEKLPCMRGRKTIASSQENQSSQTDNITLG.

This sequence belongs to the G-protein coupled receptor 1 family.

It is found in the cell membrane. Functionally, receptor for ADP. Coupled to G(i)-proteins. May play a role in hematopoiesis and the immune system. This Macaca fascicularis (Crab-eating macaque) protein is P2Y purinoceptor 13 (P2RY13).